The following is a 306-amino-acid chain: Ribosomal protein L11 methyltransferase (306 aa).

S-adenosyl-L-methionine-binding residues include Thr-152, Gly-179, Asp-201, and Asn-243.

Belongs to the methyltransferase superfamily. PrmA family.

It is found in the cytoplasm. The catalysed reaction is L-lysyl-[protein] + 3 S-adenosyl-L-methionine = N(6),N(6),N(6)-trimethyl-L-lysyl-[protein] + 3 S-adenosyl-L-homocysteine + 3 H(+). Methylates ribosomal protein L11. The chain is Ribosomal protein L11 methyltransferase from Geobacter sp. (strain M21).